A 372-amino-acid chain; its full sequence is Putative glutamate--cysteine ligase 2 (372 aa).

The protein belongs to the glutamate--cysteine ligase type 2 family. YbdK subfamily. Homodimer.

The catalysed reaction is L-cysteine + L-glutamate + ATP = gamma-L-glutamyl-L-cysteine + ADP + phosphate + H(+). In terms of biological role, ATP-dependent carboxylate-amine ligase which exhibits weak glutamate--cysteine ligase activity. In Escherichia coli O17:K52:H18 (strain UMN026 / ExPEC), this protein is Putative glutamate--cysteine ligase 2 (ybdK).